The sequence spans 234 residues: 1-(5-phosphoribosyl)-5-[(5-phosphoribosylamino)methylideneamino] imidazole-4-carboxamide isomerase (234 aa).

Aspartate 9 functions as the Proton acceptor in the catalytic mechanism. Aspartate 131 serves as the catalytic Proton donor.

The protein belongs to the HisA/HisF family.

The protein resides in the cytoplasm. It carries out the reaction 1-(5-phospho-beta-D-ribosyl)-5-[(5-phospho-beta-D-ribosylamino)methylideneamino]imidazole-4-carboxamide = 5-[(5-phospho-1-deoxy-D-ribulos-1-ylimino)methylamino]-1-(5-phospho-beta-D-ribosyl)imidazole-4-carboxamide. It participates in amino-acid biosynthesis; L-histidine biosynthesis; L-histidine from 5-phospho-alpha-D-ribose 1-diphosphate: step 4/9. In Staphylococcus epidermidis (strain ATCC 35984 / DSM 28319 / BCRC 17069 / CCUG 31568 / BM 3577 / RP62A), this protein is 1-(5-phosphoribosyl)-5-[(5-phosphoribosylamino)methylideneamino] imidazole-4-carboxamide isomerase.